Here is a 281-residue protein sequence, read N- to C-terminus: MPLTALESTINAAFDARDTVTAATQGEIRQAVEDALDLLDQGKVRVAQRDASGAWTVNQWLKKAVLLSFRLNDMGVIAGGPGGANWWDKVPSKFEGWGENRFREAGFRAVPGAIVRRSAFIAKNAVLMPSFVNLGAYVDESTMVDTWATVGSCAQIGKRVHISGGAGIGGVLEPLQAGPVIIEDDCFIGARSEVAEGVIVRKGAVLAMGVFLGASTKIVDRETGEVFVGEVPEYAVLVPGTLPGKPMKNGAPGPATACAVIVKRVDERTRSKTSINELLRD.

Substrate-binding residues include Arg-108 and Asp-145.

Belongs to the transferase hexapeptide repeat family. Homotrimer.

Its subcellular location is the cytoplasm. It carries out the reaction (S)-2,3,4,5-tetrahydrodipicolinate + succinyl-CoA + H2O = (S)-2-succinylamino-6-oxoheptanedioate + CoA. It participates in amino-acid biosynthesis; L-lysine biosynthesis via DAP pathway; LL-2,6-diaminopimelate from (S)-tetrahydrodipicolinate (succinylase route): step 1/3. The polypeptide is 2,3,4,5-tetrahydropyridine-2,6-dicarboxylate N-succinyltransferase (Rhodopseudomonas palustris (strain ATCC BAA-98 / CGA009)).